The chain runs to 532 residues: Neutral amino acid transporter A (532 aa).

At methionine 1 the chain carries N-acetylmethionine. Polar residues predominate over residues 1–10; it reads MEKSNETNGY. The interval 1-25 is disordered; sequence MEKSNETNGYLDSAQAGPAAGPGAP. Residues 1–41 are Cytoplasmic-facing; it reads MEKSNETNGYLDSAQAGPAAGPGAPGTAAGRARRCAGFLRR. The span at 14-25 shows a compositional bias: low complexity; the sequence is AQAGPAAGPGAP. 3 helical membrane passes run 42–62, 88–108, and 119–139; these read QALVLLTVSGVLAGAGLGAAL, MIILPLVVCSLVSGAASLDAS, and AYFGLTTLSASALAVALAFII. Residues 140 to 216 lie on the Extracellular side of the membrane; that stretch reads KPGSGAQTLQ…VTHEKIPIGT (77 aa). N-linked (GlcNAc...) asparagine glycosylation is found at asparagine 201 and asparagine 206. Helical transmembrane passes span 217-237, 257-277, 298-318, 328-348, 373-393, and 418-438; these read EIEGMNILGLVLFALVLGVAL, ATMVLVSWIMWYVPVGIMFLV, IFASILGHVIHGGIVLPLIYF, FLLGLLAPFATAFATCSSSAT, IGATVNMDGAAIFQCVAAVFI, and VGAAGVPAGGVLTIAIILEAI. A disordered region spans residues 500-532; the sequence is CKSEEETSPLVTHQNPAGPVASAPELESKESVL. Residues serine 507, serine 527, and serine 530 each carry the phosphoserine modification.

Belongs to the dicarboxylate/amino acid:cation symporter (DAACS) (TC 2.A.23) family. SLC1A4 subfamily. As to expression, expressed mostly in brain, muscle, and pancreas but detected in all tissues examined.

The protein localises to the membrane. It is found in the melanosome. It catalyses the reaction L-threonine(in) + Na(+)(in) = L-threonine(out) + Na(+)(out). The catalysed reaction is L-serine(in) + Na(+)(in) = L-serine(out) + Na(+)(out). It carries out the reaction L-cysteine(in) + Na(+)(in) = L-cysteine(out) + Na(+)(out). The enzyme catalyses L-alanine(in) + Na(+)(in) = L-alanine(out) + Na(+)(out). It catalyses the reaction L-proline(in) + Na(+)(in) = L-proline(out) + Na(+)(out). The catalysed reaction is 4-hydroxy-L-proline(in) + Na(+)(in) = 4-hydroxy-L-proline(out) + Na(+)(out). Its function is as follows. Sodium-dependent neutral amino-acid transporter that mediates transport of alanine, serine, cysteine, proline, hydroxyproline and threonine. In Homo sapiens (Human), this protein is Neutral amino acid transporter A.